Here is a 486-residue protein sequence, read N- to C-terminus: UDP-N-acetylmuramate--L-alanine ligase (486 aa).

An ATP-binding site is contributed by 126–132 (GTHGKTT).

The protein belongs to the MurCDEF family.

The protein resides in the cytoplasm. The catalysed reaction is UDP-N-acetyl-alpha-D-muramate + L-alanine + ATP = UDP-N-acetyl-alpha-D-muramoyl-L-alanine + ADP + phosphate + H(+). It participates in cell wall biogenesis; peptidoglycan biosynthesis. In terms of biological role, cell wall formation. In Pectobacterium atrosepticum (strain SCRI 1043 / ATCC BAA-672) (Erwinia carotovora subsp. atroseptica), this protein is UDP-N-acetylmuramate--L-alanine ligase.